The following is a 774-amino-acid chain: Lysyl oxidase homolog 2 (774 aa).

Residues 1–24 (MEGFLGFNHNHCFIVLFFVSLSLA) form the signal peptide. SRCR domains lie at 57–158 (LRLA…VVCS), 187–301 (IRPI…ASCV), 325–424 (VRLK…VRCN), and 434–543 (LRLV…VSCS). 9 disulfide bridges follow: Cys83/Cys147, Cys96/Cys157, Cys127/Cys137, Cys217/Cys290, Cys230/Cys300, Cys264/Cys274, Cys350/Cys413, Cys363/Cys423, and Cys394/Cys404. N-linked (GlcNAc...) asparagine glycosylation is present at Asn287. Asn454 carries N-linked (GlcNAc...) asparagine glycosylation. Cystine bridges form between Cys463–Cys529, Cys476–Cys542, and Cys510–Cys520. Residues 547–751 (PDLVLNAELV…MYNSVHNGAN (205 aa)) form a lysyl-oxidase like region. 2 residues coordinate Ca(2+): Asp548 and Leu549. Disulfide bonds link Cys572-Cys624, Cys578-Cys694, Cys656-Cys672, and Cys662-Cys684. Cu cation contacts are provided by His625, His627, and His629. The N-linked (GlcNAc...) asparagine glycan is linked to Asn643. Positions 652–688 (KASFCLEDTECEADVQKQYECANFGEQGITVGCWDVY) form a cross-link, lysine tyrosylquinone (Lys-Tyr). 2',4',5'-topaquinone is present on Tyr688. Residues Glu721, Asp723, Asn726, and Asn727 each coordinate Ca(2+).

This sequence belongs to the lysyl oxidase family. It depends on Cu cation as a cofactor. The cofactor is lysine tyrosylquinone residue. In terms of processing, the lysine tyrosylquinone cross-link (LTQ) is generated by condensation of the epsilon-amino group of a lysine with a topaquinone produced by oxidation of tyrosine.

The protein resides in the secreted. It localises to the extracellular space. The protein localises to the extracellular matrix. It is found in the basement membrane. Its subcellular location is the nucleus. The protein resides in the chromosome. It localises to the endoplasmic reticulum. The enzyme catalyses L-lysyl-[protein] + O2 + H2O = (S)-2-amino-6-oxohexanoyl-[protein] + H2O2 + NH4(+). Mediates the post-translational oxidative deamination of lysine residues on target proteins leading to the formation of deaminated lysine (allysine). Acts as a transcription corepressor and specifically mediates deamination of trimethylated 'Lys-4' of histone H3 (H3K4me3), a specific tag for epigenetic transcriptional activation. Shows no activity against histone H3 when it is trimethylated on 'Lys-9' (H3K9me3) or 'Lys-27' (H3K27me3) or when 'Lys-4' is monomethylated (H3K4me1) or dimethylated (H3K4me2). Also mediates deamination of methylated TAF10, a member of the transcription factor IID (TFIID) complex, which induces release of TAF10 from promoters, leading to inhibition of TFIID-dependent transcription. LOXL2-mediated deamination of TAF10 results in transcriptional repression of genes required for embryonic stem cell pluripotency including POU5F1/OCT4, NANOG, KLF4 and SOX2. Involved in epithelial to mesenchymal transition (EMT) via interaction with SNAI1 and participates in repression of E-cadherin CDH1, probably by mediating deamination of histone H3. During EMT, involved with SNAI1 in negatively regulating pericentromeric heterochromatin transcription. SNAI1 recruits LOXL2 to pericentromeric regions to oxidize histone H3 and repress transcription which leads to release of heterochromatin component CBX5/HP1A, enabling chromatin reorganization and acquisition of mesenchymal traits. Interacts with the endoplasmic reticulum protein HSPA5 which activates the IRE1-XBP1 pathway of the unfolded protein response, leading to expression of several transcription factors involved in EMT and subsequent EMT induction. When secreted into the extracellular matrix, promotes cross-linking of extracellular matrix proteins by mediating oxidative deamination of peptidyl lysine residues in precursors to fibrous collagen and elastin. Acts as a regulator of sprouting angiogenesis, probably via collagen IV scaffolding. Acts as a regulator of chondrocyte differentiation, probably by regulating expression of factors that control chondrocyte differentiation. This is Lysyl oxidase homolog 2 (LOXL2) from Gallus gallus (Chicken).